Reading from the N-terminus, the 226-residue chain is Cytidylate kinase (226 aa).

10-18 (GPASSGKST) serves as a coordination point for ATP.

The protein resides in the cytoplasm. The enzyme catalyses CMP + ATP = CDP + ADP. It carries out the reaction dCMP + ATP = dCDP + ADP. In Streptococcus pyogenes serotype M6 (strain ATCC BAA-946 / MGAS10394), this protein is Cytidylate kinase.